A 415-amino-acid polypeptide reads, in one-letter code: Serine hydroxymethyltransferase (415 aa).

Residues L119 and G123–L125 each bind (6S)-5,6,7,8-tetrahydrofolate. K228 is subject to N6-(pyridoxal phosphate)lysine. S353–F355 is a (6S)-5,6,7,8-tetrahydrofolate binding site.

Belongs to the SHMT family. Homodimer. Pyridoxal 5'-phosphate serves as cofactor.

The protein resides in the cytoplasm. It carries out the reaction (6R)-5,10-methylene-5,6,7,8-tetrahydrofolate + glycine + H2O = (6S)-5,6,7,8-tetrahydrofolate + L-serine. It participates in one-carbon metabolism; tetrahydrofolate interconversion. Its pathway is amino-acid biosynthesis; glycine biosynthesis; glycine from L-serine: step 1/1. Its function is as follows. Catalyzes the reversible interconversion of serine and glycine with tetrahydrofolate (THF) serving as the one-carbon carrier. Also exhibits THF-independent aldolase activity toward beta-hydroxyamino acids, producing glycine and aldehydes, via a retro-aldol mechanism. The sequence is that of Serine hydroxymethyltransferase from Halobacterium salinarum (strain ATCC 29341 / DSM 671 / R1).